The following is a 352-amino-acid chain: Protein RecA (352 aa).

67 to 74 is a binding site for ATP; the sequence is GPESSGKT. Residues 330–352 form a disordered region; it reads STPKPEAESQEKAAAAQDDDSLV.

The protein belongs to the RecA family.

Its subcellular location is the cytoplasm. Functionally, can catalyze the hydrolysis of ATP in the presence of single-stranded DNA, the ATP-dependent uptake of single-stranded DNA by duplex DNA, and the ATP-dependent hybridization of homologous single-stranded DNAs. It interacts with LexA causing its activation and leading to its autocatalytic cleavage. The sequence is that of Protein RecA from Chromohalobacter salexigens (strain ATCC BAA-138 / DSM 3043 / CIP 106854 / NCIMB 13768 / 1H11).